Reading from the N-terminus, the 95-residue chain is PqqA binding protein (95 aa).

This sequence belongs to the PqqD family. As to quaternary structure, monomer. Interacts with PqqE.

It functions in the pathway cofactor biosynthesis; pyrroloquinoline quinone biosynthesis. Functions as a PqqA binding protein and presents PqqA to PqqE, in the pyrroloquinoline quinone (PQQ) biosynthetic pathway. The sequence is that of PqqA binding protein from Rahnella aquatilis.